The chain runs to 306 residues: MPDSQTSNSSTNAPVTGTAHVKRGMAEMLKGGVIMDVVTAEQAKIAEDAGAVAVMALERVPSDIRAQGGVSRMSDPDMIDSIMDAVSIPVMAKVRIGHFVEAQILQSLGVDYVDESEVLTPADYANHVDKWAFTVPFVCGATNLGEALRRITEGAAMIRSKGEAGTGDVSNATTHMRGIRTEIRRLQSLPTDELYLAAKDLQAPYELVKEIAETGKLPVVLFTAGGIATPADAAMMMQLGAEGVFVGSGIFKSDNPAHRAAAIVKATTFHDDPETLAKISRGLGEAMVGINAGTLSQSDRLAERGR.

Asp-36 serves as a coordination point for D-ribose 5-phosphate. Catalysis depends on Lys-93, which acts as the Schiff-base intermediate with D-ribose 5-phosphate. Position 165 (Gly-165) interacts with D-ribose 5-phosphate. Arg-177 lines the D-glyceraldehyde 3-phosphate pocket. Residues Gly-226 and 247-248 (GS) contribute to the D-ribose 5-phosphate site.

The protein belongs to the PdxS/SNZ family. In terms of assembly, in the presence of PdxT, forms a dodecamer of heterodimers.

The catalysed reaction is aldehydo-D-ribose 5-phosphate + D-glyceraldehyde 3-phosphate + L-glutamine = pyridoxal 5'-phosphate + L-glutamate + phosphate + 3 H2O + H(+). Its pathway is cofactor biosynthesis; pyridoxal 5'-phosphate biosynthesis. Catalyzes the formation of pyridoxal 5'-phosphate from ribose 5-phosphate (RBP), glyceraldehyde 3-phosphate (G3P) and ammonia. The ammonia is provided by the PdxT subunit. Can also use ribulose 5-phosphate and dihydroxyacetone phosphate as substrates, resulting from enzyme-catalyzed isomerization of RBP and G3P, respectively. This is Pyridoxal 5'-phosphate synthase subunit PdxS from Salinispora tropica (strain ATCC BAA-916 / DSM 44818 / JCM 13857 / NBRC 105044 / CNB-440).